Reading from the N-terminus, the 121-residue chain is Glycine cleavage system H protein (121 aa).

The Lipoyl-binding domain occupies 16-98 (VATIGITAHA…EAGGWFAKVR (83 aa)). Lysine 57 carries the N6-lipoyllysine modification.

Belongs to the GcvH family. The glycine cleavage system is composed of four proteins: P, T, L and H. (R)-lipoate is required as a cofactor.

In terms of biological role, the glycine cleavage system catalyzes the degradation of glycine. The H protein shuttles the methylamine group of glycine from the P protein to the T protein. This chain is Glycine cleavage system H protein, found in Phenylobacterium zucineum (strain HLK1).